The chain runs to 488 residues: Spermatogenesis-associated protein 6 (488 aa).

Positions 1–17 (MPKVKALQCALALEIRS) are cleaved as a signal peptide. The segment at 176 to 225 (HGRLQCRTSRSQKKKSKSPERSKYCINTKNYEQPTISSKSHSPSPYTKRR) is disordered. Polar residues predominate over residues 200–220 (CINTKNYEQPTISSKSHSPSP). Phosphoserine occurs at positions 217 and 219. Lys-248 participates in a covalent cross-link: Glycyl lysine isopeptide (Lys-Gly) (interchain with G-Cter in SUMO2). A phosphoserine mark is found at Ser-265, Ser-274, Ser-325, Ser-343, Ser-346, Ser-354, Ser-424, Ser-465, and Ser-487.

This sequence belongs to the SPATA6 family. In terms of assembly, interacts with MYL6. In terms of tissue distribution, specifically expressed in developing spermatids and mature spermatozoa (at protein level). Isoform 1 is weakly expressed in testis, ovary, thymus and placenta. Isoform 2 and isoform 3 are testis-specific. Expression isw higher in spermatids than in spermatocytes and spermatogonia.

The protein resides in the secreted. The protein localises to the cell projection. It is found in the cilium. It localises to the flagellum. Its function is as follows. Required for formation of the sperm connecting piece during spermiogenesis. Sperm connecting piece is essential for linking the developing flagellum to the head during late spermiogenesis. May be involved in myosin-based microfilament transport through interaction with myosin subunits. This chain is Spermatogenesis-associated protein 6, found in Mus musculus (Mouse).